A 40-amino-acid chain; its full sequence is MKKLVLCVSILAVILSGVALTQLSTDSPSNIQVAERPVGG.

Propeptides lie at residues 1–34 (MKKL…IQVA) and glycine 40.

It belongs to the Phr family. In terms of processing, contains a predicted signal peptide cleavage site in the N-terminal region, however the propeptide is probably only subject to processing events at the ends of the mature peptide.

It localises to the secreted. Its subcellular location is the cytoplasm. Signaling molecule involved in the regulation of genetic competence development. Secreted during production, but the mature peptide acts intracellularly, indicating that it needs to be imported into the cell to function. Stimulates expression of the genes controlled by ComA, a transcriptional factor that regulates the development of genetic competence. Acts by inhibiting RapK, which regulates the activity of ComA. In Bacillus subtilis (strain 168), this protein is RapK inhibitor (phrK).